The primary structure comprises 363 residues: Peptide chain release factor 1 (363 aa).

Gln-236 carries the post-translational modification N5-methylglutamine. The tract at residues 286–305 (KKEMERSTMRKSQIGSGDRS) is disordered.

Belongs to the prokaryotic/mitochondrial release factor family. Post-translationally, methylated by PrmC. Methylation increases the termination efficiency of RF1.

It localises to the cytoplasm. Functionally, peptide chain release factor 1 directs the termination of translation in response to the peptide chain termination codons UAG and UAA. The polypeptide is Peptide chain release factor 1 (Wolbachia pipientis subsp. Culex pipiens (strain wPip)).